The following is a 498-amino-acid chain: MRINPTTSGSGVSTLEKKNPGRVVQIIGPVLDVAFPPGKMPNIYNALVVQGRDSVGQPINVACEVQQLLGNNRVRAVAMSATDGLTRGMEVIDTGAPISVPVGGATLGRIFNVLGEPVDNLGPVDTSTTSPIHRSAPAFIQLDTKLSIFETGIKVVDLLAPYRRGGKIGLFGGAGVGKTVLIMELINNIAKAHGGVSVFGGVGERTREGNDLYMEMKESGVINEENIAESKVALVYGQMNEPPGARMRVGLTALTMAEYFRDVNEQDVLLFIDNIFRFVQAGSEVSALLGRMPSAVGYQPTLSTEMGSLQERITSTKEGSITSIQAVYVPADDLTDPAPATTFAHLDATTVLSRGLAAKGIYPAVDPLDSTSTMLQPRIVGEEHYETAQRVKQTLQRYKELQDIIAILGLDELSEEDRLLVARARKIERFLSQPFFVAEVFTGSPGKYVGLAETIRGFQLILSGELDGLPEQAFYLVGNIDEATAKAMNLEMESNLKK.

172–179 contacts ATP; the sequence is GGAGVGKT.

Belongs to the ATPase alpha/beta chains family. In terms of assembly, F-type ATPases have 2 components, CF(1) - the catalytic core - and CF(0) - the membrane proton channel. CF(1) has five subunits: alpha(3), beta(3), gamma(1), delta(1), epsilon(1). CF(0) has four main subunits: a(1), b(1), b'(1) and c(9-12).

Its subcellular location is the plastid. The protein resides in the chloroplast thylakoid membrane. The enzyme catalyses ATP + H2O + 4 H(+)(in) = ADP + phosphate + 5 H(+)(out). Produces ATP from ADP in the presence of a proton gradient across the membrane. The catalytic sites are hosted primarily by the beta subunits. The sequence is that of ATP synthase subunit beta, chloroplastic from Nicotiana bigelovii (Bigelov's tobacco).